Here is an 858-residue protein sequence, read N- to C-terminus: Leucine--tRNA ligase (858 aa).

Residues 42–52 (PYPSGRLHMGH) carry the 'HIGH' region motif. The 'KMSKS' region signature appears at 618-622 (KMSKS). Residue Lys621 participates in ATP binding.

The protein belongs to the class-I aminoacyl-tRNA synthetase family.

Its subcellular location is the cytoplasm. It catalyses the reaction tRNA(Leu) + L-leucine + ATP = L-leucyl-tRNA(Leu) + AMP + diphosphate. The sequence is that of Leucine--tRNA ligase from Vibrio cholerae serotype O1 (strain ATCC 39315 / El Tor Inaba N16961).